The primary structure comprises 451 residues: DNA double-strand break repair protein Mre11 (451 aa).

Mn(2+)-binding residues include aspartate 8, histidine 10, aspartate 49, and asparagine 84. Histidine 85 (proton donor) is an active-site residue. The Mn(2+) site is built by histidine 168, histidine 198, and histidine 200. The tract at residues 374–451 is disordered; the sequence is REDNPPDLGD…GRPSLDRWIG (78 aa). The span at 396-416 shows a compositional bias: acidic residues; it reads GSEESSEEPEESDGEEVGLEV.

The protein belongs to the MRE11/RAD32 family. As to quaternary structure, homodimer. Forms a heterotetramer composed of two Mre11 subunits and two Rad50 subunits. Requires Mn(2+) as cofactor.

With respect to regulation, nuclease activity is regulated by Rad50. In terms of biological role, part of the Rad50/Mre11 complex, which is involved in the early steps of DNA double-strand break (DSB) repair. The complex may facilitate opening of the processed DNA ends to aid in the recruitment of HerA and NurA. Mre11 binds to DSB ends and has both double-stranded 3'-5' exonuclease activity and single-stranded endonuclease activity. This Methanopyrus kandleri (strain AV19 / DSM 6324 / JCM 9639 / NBRC 100938) protein is DNA double-strand break repair protein Mre11.